Reading from the N-terminus, the 105-residue chain is NADH-quinone oxidoreductase subunit K (105 aa).

The next 3 membrane-spanning stretches (helical) occupy residues 4–24 (LTHY…GVIV), 28–48 (IIVI…SLVA), and 66–86 (LSIF…ALIV).

This sequence belongs to the complex I subunit 4L family. In terms of assembly, NDH-1 is composed of 14 different subunits. Subunits NuoA, H, J, K, L, M, N constitute the membrane sector of the complex.

It is found in the cell inner membrane. The catalysed reaction is a quinone + NADH + 5 H(+)(in) = a quinol + NAD(+) + 4 H(+)(out). Its function is as follows. NDH-1 shuttles electrons from NADH, via FMN and iron-sulfur (Fe-S) centers, to quinones in the respiratory chain. The immediate electron acceptor for the enzyme in this species is believed to be ubiquinone. Couples the redox reaction to proton translocation (for every two electrons transferred, four hydrogen ions are translocated across the cytoplasmic membrane), and thus conserves the redox energy in a proton gradient. The polypeptide is NADH-quinone oxidoreductase subunit K (Akkermansia muciniphila (strain ATCC BAA-835 / DSM 22959 / JCM 33894 / BCRC 81048 / CCUG 64013 / CIP 107961 / Muc)).